The sequence spans 171 residues: MTIQAMYPGTFDPLTYGHLDIIIRAHKIFDKIFLAVAENSQKHPLFSLEERVIFAKQATAMLDYVTVFGFNDLTINVMKKKQVNILIRGLRNRSDFEYEIQLAKINNYFSNEVETVFMISTDIWACLSSKLVKEIAQYGGRIDHFIPNFIVEKVIEKLRNTEKKNKNISFL.

Threonine 10 contributes to the substrate binding site. ATP-binding positions include 10–11 (TF) and histidine 18. The substrate site is built by lysine 42, threonine 74, and arginine 88. ATP contacts are provided by residues 89–91 (GLR), glutamate 99, and 124–130 (WACLSSK).

This sequence belongs to the bacterial CoaD family. As to quaternary structure, homohexamer. The cofactor is Mg(2+).

It is found in the cytoplasm. It carries out the reaction (R)-4'-phosphopantetheine + ATP + H(+) = 3'-dephospho-CoA + diphosphate. It functions in the pathway cofactor biosynthesis; coenzyme A biosynthesis; CoA from (R)-pantothenate: step 4/5. Its function is as follows. Reversibly transfers an adenylyl group from ATP to 4'-phosphopantetheine, yielding dephospho-CoA (dPCoA) and pyrophosphate. The sequence is that of Phosphopantetheine adenylyltransferase from Blochmanniella pennsylvanica (strain BPEN).